A 231-amino-acid chain; its full sequence is MNKKTKRMKKIKEHINFAKLHHIDETIDLLKKSSTVKFNESIDIAINLGINSKKSDQNIRSSTVLPNGIGRSIRVAVFTQGDNIAIAKDAGAELIGMEDLSEKIKKEGVDFDVVIATPDAMKIVTQLGQILGPRNLMPNTKLGTITTNIAEAIKNAKTGQVRYRNDKNGIIHATIGRINFHKNEIKENLNVFLESIKKAKPPQSKGIYIKKIVLSTTMGVGLMVDQSTLSL.

It belongs to the universal ribosomal protein uL1 family. In terms of assembly, part of the 50S ribosomal subunit.

Its function is as follows. Binds directly to 23S rRNA. The L1 stalk is quite mobile in the ribosome, and is involved in E site tRNA release. In terms of biological role, protein L1 is also a translational repressor protein, it controls the translation of the L11 operon by binding to its mRNA. The polypeptide is Large ribosomal subunit protein uL1 (Buchnera aphidicola subsp. Acyrthosiphon pisum (strain APS) (Acyrthosiphon pisum symbiotic bacterium)).